The primary structure comprises 308 residues: Ribosomal RNA large subunit methyltransferase F (308 aa).

Belongs to the methyltransferase superfamily. METTL16/RlmF family.

Its subcellular location is the cytoplasm. It carries out the reaction adenosine(1618) in 23S rRNA + S-adenosyl-L-methionine = N(6)-methyladenosine(1618) in 23S rRNA + S-adenosyl-L-homocysteine + H(+). Specifically methylates the adenine in position 1618 of 23S rRNA. The protein is Ribosomal RNA large subunit methyltransferase F of Salmonella heidelberg (strain SL476).